The sequence spans 439 residues: Trigger factor (439 aa).

In terms of domain architecture, PPIase FKBP-type spans 170 to 255 (GDTVVIDFDG…IHELKKLETP (86 aa)).

It belongs to the FKBP-type PPIase family. Tig subfamily.

Its subcellular location is the cytoplasm. The catalysed reaction is [protein]-peptidylproline (omega=180) = [protein]-peptidylproline (omega=0). Its function is as follows. Involved in protein export. Acts as a chaperone by maintaining the newly synthesized protein in an open conformation. Functions as a peptidyl-prolyl cis-trans isomerase. This is Trigger factor from Oenococcus oeni (strain ATCC BAA-331 / PSU-1).